A 355-amino-acid polypeptide reads, in one-letter code: Serum paraoxonase/arylesterase 1 (355 aa).

The cysteines at positions 42 and 353 are disulfide-linked. Ca(2+) is bound by residues E53 and D54. H115 serves as the catalytic Proton acceptor. Ca(2+) contacts are provided by I117, N168, D169, and N224. Residue N253 is glycosylated (N-linked (GlcNAc...) asparagine). Residues D269 and N270 each contribute to the Ca(2+) site. N-linked (GlcNAc...) asparagine glycosylation is found at N270 and N324.

Belongs to the paraoxonase family. Homodimer. Interacts with CLU. Ca(2+) serves as cofactor. The signal sequence is not cleaved. In terms of tissue distribution, plasma, liver, kidney, heart, brain, small intestine and lung. In the plasma, associated with HDL.

The protein localises to the secreted. It is found in the extracellular space. The catalysed reaction is a phenyl acetate + H2O = a phenol + acetate + H(+). It carries out the reaction An aryl dialkyl phosphate + H2O = dialkyl phosphate + an aryl alcohol.. It catalyses the reaction an N-acyl-L-homoserine lactone + H2O = an N-acyl-L-homoserine + H(+). In terms of biological role, hydrolyzes the toxic metabolites of a variety of organophosphorus insecticides. Capable of hydrolyzing a broad spectrum of organophosphate substrates and lactones, and a number of aromatic carboxylic acid esters. Mediates an enzymatic protection of low density lipoproteins against oxidative modification. In Mus musculus (Mouse), this protein is Serum paraoxonase/arylesterase 1 (Pon1).